The chain runs to 316 residues: tRNA dimethylallyltransferase (316 aa).

An ATP-binding site is contributed by 17 to 24 (GPTASGKT). Residue 19 to 24 (TASGKT) participates in substrate binding. Interaction with substrate tRNA regions lie at residues 42–45 (DSAL), 166–170 (QRLSR), 247–252 (RCVGYR), and 280–287 (KRQITWLR).

The protein belongs to the IPP transferase family. Monomer. The cofactor is Mg(2+).

The catalysed reaction is adenosine(37) in tRNA + dimethylallyl diphosphate = N(6)-dimethylallyladenosine(37) in tRNA + diphosphate. In terms of biological role, catalyzes the transfer of a dimethylallyl group onto the adenine at position 37 in tRNAs that read codons beginning with uridine, leading to the formation of N6-(dimethylallyl)adenosine (i(6)A). The polypeptide is tRNA dimethylallyltransferase (Shigella flexneri serotype 5b (strain 8401)).